The primary structure comprises 310 residues: tRNA-cytidine(32) 2-sulfurtransferase (310 aa).

The short motif at 44–49 is the PP-loop motif element; that stretch reads SGGKDS. [4Fe-4S] cluster is bound by residues Cys-119, Cys-122, and Cys-210.

The protein belongs to the TtcA family. In terms of assembly, homodimer. The cofactor is Mg(2+). Requires [4Fe-4S] cluster as cofactor.

The protein resides in the cytoplasm. It catalyses the reaction cytidine(32) in tRNA + S-sulfanyl-L-cysteinyl-[cysteine desulfurase] + AH2 + ATP = 2-thiocytidine(32) in tRNA + L-cysteinyl-[cysteine desulfurase] + A + AMP + diphosphate + H(+). The protein operates within tRNA modification. In terms of biological role, catalyzes the ATP-dependent 2-thiolation of cytidine in position 32 of tRNA, to form 2-thiocytidine (s(2)C32). The sulfur atoms are provided by the cysteine/cysteine desulfurase (IscS) system. The chain is tRNA-cytidine(32) 2-sulfurtransferase from Saccharophagus degradans (strain 2-40 / ATCC 43961 / DSM 17024).